The chain runs to 120 residues: Putative pterin-4-alpha-carbinolamine dehydratase (120 aa).

It belongs to the pterin-4-alpha-carbinolamine dehydratase family.

It carries out the reaction (4aS,6R)-4a-hydroxy-L-erythro-5,6,7,8-tetrahydrobiopterin = (6R)-L-erythro-6,7-dihydrobiopterin + H2O. The protein is Putative pterin-4-alpha-carbinolamine dehydratase of Bdellovibrio bacteriovorus (strain ATCC 15356 / DSM 50701 / NCIMB 9529 / HD100).